A 350-amino-acid polypeptide reads, in one-letter code: Probable sugar phosphate/phosphate translocator At4g32390 (350 aa).

10 helical membrane passes run 15 to 35, 49 to 69, 89 to 109, 112 to 132, 146 to 166, 168 to 188, 205 to 225, 235 to 255, 263 to 283, and 286 to 306; these read ILLSYTYVAIWIFLSFTVIVY, FPITLTMIHMAFCSSLAVILI, VVPIGALYSLSLWLSNSAYIY, VSFIQMLKALMPVAVYSIGVL, MLSISFGVAIAAYGEAKFDTW, VMLQLGAVAFEATRLVLIQIL, VAPCCLVFLFFPWIFVELPIL, FVIFGTNSVCAFALNLAVFLL, TMNVAGVVKDWLLIAFSWSVI, and TVTPLNLFGYGLAFLGVAYYN. An EamA domain is found at 38 to 155; sequence YILDKKMYNW…MLSISFGVAI (118 aa). Residues 324-350 form a disordered region; it reads QGDEEEAGKLLEERESEAAAKRNETED.

It belongs to the TPT transporter family. TPT (TC 2.A.7.9) subfamily.

The protein localises to the membrane. The sequence is that of Probable sugar phosphate/phosphate translocator At4g32390 from Arabidopsis thaliana (Mouse-ear cress).